The following is a 400-amino-acid chain: Argininosuccinate synthase (400 aa).

Residue 8-16 participates in ATP binding; sequence AYSGGLDTS. The L-citrulline site is built by Tyr87 and Ser92. Gly117 serves as a coordination point for ATP. Thr119, Asn123, and Asp124 together coordinate L-aspartate. An L-citrulline-binding site is contributed by Asn123. L-citrulline-binding residues include Arg127, Ser175, Glu259, and Tyr271.

It belongs to the argininosuccinate synthase family. Type 1 subfamily. Homotetramer.

Its subcellular location is the cytoplasm. The enzyme catalyses L-citrulline + L-aspartate + ATP = 2-(N(omega)-L-arginino)succinate + AMP + diphosphate + H(+). It participates in amino-acid biosynthesis; L-arginine biosynthesis; L-arginine from L-ornithine and carbamoyl phosphate: step 2/3. The sequence is that of Argininosuccinate synthase from Frankia casuarinae (strain DSM 45818 / CECT 9043 / HFP020203 / CcI3).